We begin with the raw amino-acid sequence, 366 residues long: Ribosomal RNA large subunit methyltransferase M (366 aa).

Residues S188, 221-224, D240, D260, and D277 each bind S-adenosyl-L-methionine; that span reads CPGG. Residue K306 is the Proton acceptor of the active site.

The protein belongs to the class I-like SAM-binding methyltransferase superfamily. RNA methyltransferase RlmE family. RlmM subfamily. Monomer.

The protein localises to the cytoplasm. It catalyses the reaction cytidine(2498) in 23S rRNA + S-adenosyl-L-methionine = 2'-O-methylcytidine(2498) in 23S rRNA + S-adenosyl-L-homocysteine + H(+). In terms of biological role, catalyzes the 2'-O-methylation at nucleotide C2498 in 23S rRNA. The sequence is that of Ribosomal RNA large subunit methyltransferase M from Klebsiella pneumoniae (strain 342).